A 155-amino-acid chain; its full sequence is Endoribonuclease YbeY (155 aa).

Zn(2+)-binding residues include His119, His123, and His129.

This sequence belongs to the endoribonuclease YbeY family. The cofactor is Zn(2+).

The protein resides in the cytoplasm. Functionally, single strand-specific metallo-endoribonuclease involved in late-stage 70S ribosome quality control and in maturation of the 3' terminus of the 16S rRNA. This is Endoribonuclease YbeY from Mycoplasmopsis synoviae (strain 53) (Mycoplasma synoviae).